Consider the following 276-residue polypeptide: MEQLIRDEMRVLPSIDPHFEVTRRVEFIKTKLQQSGCKSLILGISGGVDSTTCGRLAQMAVDSLNESAGSDEYQFIAVRLPYGEQKDEDEAQLALSFIQPSQSVSVNIKAGVDGLHAASHVALEGTGLLPTDSAKIDFVKGNVKARARMIAQYEIAGYVGGLVIGTDHSAENITGFYTKHGDGACDLAPLFGLNKRQVRELAATLGAPEQLVKKVPTADLEELDPQKADEAALNLSYDQIDDFLEGKAVSQDVSDRLVGIYKATQHKRQPIPTIYD.

43 to 50 (GISGGVDS) is a binding site for ATP. Asp-49 provides a ligand contact to Mg(2+). Arg-146 contributes to the deamido-NAD(+) binding site. Thr-166 contacts ATP. Glu-171 is a binding site for Mg(2+). The deamido-NAD(+) site is built by Lys-179 and Asp-186. Residues Lys-195 and Thr-217 each coordinate ATP. Residue 266–267 (HK) participates in deamido-NAD(+) binding.

The protein belongs to the NAD synthetase family. Homodimer.

The catalysed reaction is deamido-NAD(+) + NH4(+) + ATP = AMP + diphosphate + NAD(+) + H(+). It participates in cofactor biosynthesis; NAD(+) biosynthesis; NAD(+) from deamido-NAD(+) (ammonia route): step 1/1. In terms of biological role, catalyzes the ATP-dependent amidation of deamido-NAD to form NAD. Uses ammonia as a nitrogen source. The chain is NH(3)-dependent NAD(+) synthetase from Vibrio atlanticus (strain LGP32) (Vibrio splendidus (strain Mel32)).